Here is a 183-residue protein sequence, read N- to C-terminus: Translocon-associated protein subunit beta (183 aa).

The signal sequence occupies residues 1 to 17 (MRLLAVVVLALLAVSQA). Residues 18-146 (EEGARLLASK…REFDRRFSPH (129 aa)) lie on the Lumenal side of the membrane. Asparagine 88 carries an N-linked (GlcNAc...) (high mannose) asparagine glycan. A glycan (N-linked (GlcNAc...) asparagine) is linked at asparagine 104. Residues 147–167 (FLDWAAFGVMTLPSIGIPLLL) traverse the membrane as a helical segment. At 168 to 183 (WYSSKRKYDTPKPKKN) the chain is on the cytoplasmic side.

Belongs to the TRAP-beta family. As to quaternary structure, heterotetramer of TRAP-alpha, TRAP-beta, TRAP-delta and TRAP-gamma. Interacts with STING1.

The protein localises to the endoplasmic reticulum membrane. In terms of biological role, TRAP proteins are part of a complex whose function is to bind calcium to the ER membrane and thereby regulate the retention of ER resident proteins. This Mus musculus (Mouse) protein is Translocon-associated protein subunit beta (Ssr2).